The chain runs to 46 residues: Small polypeptide DEVIL 5 (46 aa).

A helical transmembrane segment spans residues 8 to 24 (VGGTKRKMWSRGVGGVV). The interval 15-46 (MWSRGVGGVVREQKAKLYIIRRCVVMLLCWHD) is required for DVL/RTFL small polypeptide activity.

It belongs to the DVL/RTFL small polypeptides family. Mostly expressed in roots and flowers, and, to a lower extent, in leaves and stems.

It is found in the cell membrane. Functionally, small polypeptide acting as a regulatory molecule which coordinates cellular responses required for differentiation, growth and development, including leaves shape, pedicule elongation, inflorescence organization and fruit maturation, probably by restricting polar cell proliferation in lateral organs and coordinating socket cell recruitment and differentiation at trichome sites. This is Small polypeptide DEVIL 5 from Arabidopsis thaliana (Mouse-ear cress).